The following is a 232-amino-acid chain: A-type ATP synthase subunit D (232 aa).

The protein belongs to the V-ATPase D subunit family. Has multiple subunits with at least A(3), B(3), C, D, E, F, H, I and proteolipid K(x).

It is found in the cell membrane. Its function is as follows. Component of the A-type ATP synthase that produces ATP from ADP in the presence of a proton gradient across the membrane. The polypeptide is A-type ATP synthase subunit D (Methanopyrus kandleri (strain AV19 / DSM 6324 / JCM 9639 / NBRC 100938)).